Consider the following 686-residue polypeptide: Glycogenin (686 aa).

4 residues coordinate UDP: leucine 13, asparagine 16, tyrosine 19, and arginine 82. UDP-alpha-D-glucose-binding residues include leucine 13, asparagine 16, tyrosine 19, arginine 82, lysine 91, aspartate 107, alanine 108, aspartate 109, asparagine 139, threonine 140, aspartate 166, aspartate 169, and glutamine 170. Residues aspartate 107, alanine 108, and aspartate 109 each contribute to the UDP site. Aspartate 107 lines the Mn(2+) pocket. Aspartate 109 is a binding site for Mn(2+). Tyrosine 196 and tyrosine 198 each carry an O-linked (Glc...) tyrosine glycan. UDP contacts are provided by histidine 213, glycine 216, and lysine 219. A Mn(2+)-binding site is contributed by histidine 213. Glycine 216 and lysine 219 together coordinate UDP-alpha-D-glucose. Disordered stretches follow at residues 264–331 (VKGE…ANFP), 381–444 (PEPT…RGNA), 460–533 (KHRR…GVPA), and 603–686 (KPLR…VLET). Low complexity-rich tracts occupy residues 285–308 (SSQSHKTQSHQTQSQNTHSTYTSH) and 398–416 (SAASTATPSAVASATASPT). Residues 307–686 (SHGASWDASR…TEEERDVLET (380 aa)) are not required for catalytic activity. 2 stretches are compositionally biased toward polar residues: residues 424–442 (VTPTTPASANPWTSFTTRG) and 471–483 (AATSRPTSPGRAQ). Residues 677–686 (TEEERDVLET) show a composition bias toward acidic residues.

It belongs to the glycosyltransferase 8 family. Glycogenin subfamily. Interacts with glycogen synthase gsy-1; the interaction is direct. It depends on Mn(2+) as a cofactor.

It localises to the cytoplasm. The protein resides in the vacuole. The enzyme catalyses L-tyrosyl-[glycogenin] + UDP-alpha-D-glucose = alpha-D-glucosyl-L-tyrosyl-[glycogenin] + UDP + H(+). It carries out the reaction [1,4-alpha-D-glucosyl](n)-L-tyrosyl-[glycogenin] + UDP-alpha-D-glucose = [1,4-alpha-D-glucosyl](n+1)-L-tyrosyl-[glycogenin] + UDP + H(+). Functionally, self-glucosylating initiator of glycogen synthesis. It catalyzes the formation of a short alpha (1,4)-glucosyl chain covalently attached via a glucose 1-O-tyrosyl linkage to internal tyrosine residues and these chains act as primers for the elongation reaction catalyzed by glycogen synthase. The protein is Glycogenin of Neurospora crassa (strain ATCC 24698 / 74-OR23-1A / CBS 708.71 / DSM 1257 / FGSC 987).